The following is a 348-amino-acid chain: Phosphoribosylformylglycinamidine cyclo-ligase (348 aa).

It belongs to the AIR synthase family.

It localises to the cytoplasm. It carries out the reaction 2-formamido-N(1)-(5-O-phospho-beta-D-ribosyl)acetamidine + ATP = 5-amino-1-(5-phospho-beta-D-ribosyl)imidazole + ADP + phosphate + H(+). It functions in the pathway purine metabolism; IMP biosynthesis via de novo pathway; 5-amino-1-(5-phospho-D-ribosyl)imidazole from N(2)-formyl-N(1)-(5-phospho-D-ribosyl)glycinamide: step 2/2. The polypeptide is Phosphoribosylformylglycinamidine cyclo-ligase (Sorangium cellulosum (strain So ce56) (Polyangium cellulosum (strain So ce56))).